A 365-amino-acid chain; its full sequence is Caffeic acid 3-O-methyltransferase 1 (365 aa).

Residue 130 to 136 (MNQDKVL) coordinates substrate. Residues 162-180 (AFEYHGTDPRFNKVFNKGM) are substrate binding. S-adenosyl-L-methionine is bound by residues G208, D231, D251, M252, and K265. H269 functions as the Proton acceptor in the catalytic mechanism.

It belongs to the class I-like SAM-binding methyltransferase superfamily. Cation-independent O-methyltransferase family. COMT subfamily. Homodimer. In terms of processing, the N-terminus is blocked. In terms of tissue distribution, xylem.

It carries out the reaction (E)-caffeate + S-adenosyl-L-methionine = (E)-ferulate + S-adenosyl-L-homocysteine + H(+). It participates in aromatic compound metabolism; phenylpropanoid biosynthesis. Catalyzes the conversion of caffeic acid to ferulic acid and of 5-hydroxyferulic acid to sinapic acid. The resulting products may subsequently be converted to the corresponding alcohols that are incorporated into lignins. This is Caffeic acid 3-O-methyltransferase 1 (OMT1) from Populus tremuloides (Quaking aspen).